The chain runs to 577 residues: 2-succinyl-5-enolpyruvyl-6-hydroxy-3-cyclohexene-1-carboxylate synthase (577 aa).

It belongs to the TPP enzyme family. MenD subfamily. As to quaternary structure, homodimer. It depends on Mg(2+) as a cofactor. The cofactor is Mn(2+). Thiamine diphosphate serves as cofactor.

The enzyme catalyses isochorismate + 2-oxoglutarate + H(+) = 5-enolpyruvoyl-6-hydroxy-2-succinyl-cyclohex-3-ene-1-carboxylate + CO2. It functions in the pathway quinol/quinone metabolism; 1,4-dihydroxy-2-naphthoate biosynthesis; 1,4-dihydroxy-2-naphthoate from chorismate: step 2/7. It participates in quinol/quinone metabolism; menaquinone biosynthesis. Functionally, catalyzes the thiamine diphosphate-dependent decarboxylation of 2-oxoglutarate and the subsequent addition of the resulting succinic semialdehyde-thiamine pyrophosphate anion to isochorismate to yield 2-succinyl-5-enolpyruvyl-6-hydroxy-3-cyclohexene-1-carboxylate (SEPHCHC). This is 2-succinyl-5-enolpyruvyl-6-hydroxy-3-cyclohexene-1-carboxylate synthase from Christiangramia forsetii (strain DSM 17595 / CGMCC 1.15422 / KT0803) (Gramella forsetii).